We begin with the raw amino-acid sequence, 188 residues long: Elongation factor P (188 aa).

Lysine 34 bears the N6-(3,6-diaminohexanoyl)-5-hydroxylysine mark.

Belongs to the elongation factor P family. Post-translationally, may be beta-lysylated on the epsilon-amino group of Lys-34 by the combined action of EpmA and EpmB, and then hydroxylated on the C5 position of the same residue by EpmC (if this protein is present). Lysylation is critical for the stimulatory effect of EF-P on peptide-bond formation. The lysylation moiety may extend toward the peptidyltransferase center and stabilize the terminal 3-CCA end of the tRNA. Hydroxylation of the C5 position on Lys-34 may allow additional potential stabilizing hydrogen-bond interactions with the P-tRNA.

The protein localises to the cytoplasm. Its pathway is protein biosynthesis; polypeptide chain elongation. In terms of biological role, involved in peptide bond synthesis. Alleviates ribosome stalling that occurs when 3 or more consecutive Pro residues or the sequence PPG is present in a protein, possibly by augmenting the peptidyl transferase activity of the ribosome. Modification of Lys-34 is required for alleviation. The protein is Elongation factor P of Klebsiella pneumoniae (strain 342).